The sequence spans 266 residues: Large ribosomal subunit protein eL8 (266 aa).

Residues Lys-11, Lys-20, and Lys-21 each participate in a glycyl lysine isopeptide (Lys-Gly) (interchain with G-Cter in SUMO2) cross-link. Residue Lys-34 is modified to N6-acetyllysine. Lys-48 participates in a covalent cross-link: Glycyl lysine isopeptide (Lys-Gly) (interchain with G-Cter in SUMO2). Lys-97 bears the N6-acetyllysine; alternate mark. Residue Lys-97 forms a Glycyl lysine isopeptide (Lys-Gly) (interchain with G-Cter in SUMO2); alternate linkage. Residue Lys-125 forms a Glycyl lysine isopeptide (Lys-Gly) (interchain with G-Cter in SUMO2) linkage. N6-acetyllysine is present on Lys-217. Lys-245 participates in a covalent cross-link: Glycyl lysine isopeptide (Lys-Gly) (interchain with G-Cter in SUMO2).

It belongs to the eukaryotic ribosomal protein eL8 family. As to quaternary structure, component of the large ribosomal subunit. Interacts with CRY1. Interacts with DICER1, AGO2, TARBP2, MOV10 and EIF6; they form a large RNA-induced silencing complex (RISC).

The protein localises to the cytoplasm. Functionally, component of the large ribosomal subunit. The ribosome is a large ribonucleoprotein complex responsible for the synthesis of proteins in the cell. The protein is Large ribosomal subunit protein eL8 (RPL7A) of Bos taurus (Bovine).